Reading from the N-terminus, the 224-residue chain is Methylamine utilization ferredoxin-type protein MauM (224 aa).

The first 41 residues, M1–A41, serve as a signal peptide directing secretion. 4Fe-4S ferredoxin-type domains follow at residues A54–W84, G91–P124, V133–Q169, and M177–R208. 16 residues coordinate [4Fe-4S] cluster: C64, C67, C70, C74, C102, C105, C110, C114, C142, C150, C153, C157, C186, C189, C192, and C196.

It participates in one-carbon metabolism; methylamine degradation. Its function is as follows. Involved in electron transfer. The polypeptide is Methylamine utilization ferredoxin-type protein MauM (mauM) (Paracoccus denitrificans (strain Pd 1222)).